A 232-amino-acid chain; its full sequence is tRNA (guanine-N(7)-)-methyltransferase (232 aa).

Residues E63, E88, D115, and D137 each contribute to the S-adenosyl-L-methionine site. D137 is an active-site residue. Substrate is bound by residues K141, D173, and 211 to 214 (TRYE).

The protein belongs to the class I-like SAM-binding methyltransferase superfamily. TrmB family.

The catalysed reaction is guanosine(46) in tRNA + S-adenosyl-L-methionine = N(7)-methylguanosine(46) in tRNA + S-adenosyl-L-homocysteine. The protein operates within tRNA modification; N(7)-methylguanine-tRNA biosynthesis. Its function is as follows. Catalyzes the formation of N(7)-methylguanine at position 46 (m7G46) in tRNA. This Agrobacterium fabrum (strain C58 / ATCC 33970) (Agrobacterium tumefaciens (strain C58)) protein is tRNA (guanine-N(7)-)-methyltransferase.